Consider the following 378-residue polypeptide: E3 ubiquitin-protein ligase ATL9 (378 aa).

Residues 1 to 33 (MAILDTKSSRWIPHNLLFLLLLLLLQSVPYGFG) form the signal peptide. A helical membrane pass occupies residues 51 to 71 (VVVVITVLFLVIFFMVFGSIF). The segment at 135–177 (CAVCLCEFEDDETLRLMPPCCHVFHADCVDVWLSEHSTCPLCR) adopts an RING-type; atypical zinc-finger fold. 3 disordered regions span residues 187 to 211 (DDDDSTESYSGTDPGTISSSTDPER), 300 to 326 (ARSSRSGYRSGSVGSERSAFPYGRKSN), and 350 to 378 (FSGDAPKNLPTSIEAGERSFERLRPDERV). Positions 193–207 (ESYSGTDPGTISSST) are enriched in polar residues. The span at 301-317 (RSSRSGYRSGSVGSERS) shows a compositional bias: low complexity. The span at 364–378 (AGERSFERLRPDERV) shows a compositional bias: basic and acidic residues.

The protein belongs to the RING-type zinc finger family. ATL subfamily.

It is found in the membrane. It carries out the reaction S-ubiquitinyl-[E2 ubiquitin-conjugating enzyme]-L-cysteine + [acceptor protein]-L-lysine = [E2 ubiquitin-conjugating enzyme]-L-cysteine + N(6)-ubiquitinyl-[acceptor protein]-L-lysine.. The protein operates within protein modification; protein ubiquitination. E3 ubiquitin-protein ligase able to catalyze polyubiquitination with ubiquitin-conjugating enzyme E2 UBC8 in vitro. May be involved in the early steps of the plant defense signaling pathway. The chain is E3 ubiquitin-protein ligase ATL9 (ATL9) from Arabidopsis thaliana (Mouse-ear cress).